The following is a 159-amino-acid chain: Ribosomal RNA large subunit methyltransferase H (159 aa).

Residues Leu-76, Gly-108, and Phe-127–Phe-132 each bind S-adenosyl-L-methionine.

Belongs to the RNA methyltransferase RlmH family. In terms of assembly, homodimer.

Its subcellular location is the cytoplasm. The catalysed reaction is pseudouridine(1915) in 23S rRNA + S-adenosyl-L-methionine = N(3)-methylpseudouridine(1915) in 23S rRNA + S-adenosyl-L-homocysteine + H(+). Specifically methylates the pseudouridine at position 1915 (m3Psi1915) in 23S rRNA. The chain is Ribosomal RNA large subunit methyltransferase H from Geobacillus kaustophilus (strain HTA426).